A 47-amino-acid chain; its full sequence is Delta-actitoxin-Axm1d (47 aa).

3 cysteine pairs are disulfide-bonded: cysteine 4–cysteine 44, cysteine 6–cysteine 34, and cysteine 27–cysteine 45.

The protein belongs to the sea anemone sodium channel inhibitory toxin family. Type I subfamily.

It is found in the secreted. It localises to the nematocyst. Binds specifically to voltage-gated sodium channels (Nav), thereby delaying their inactivation during signal transduction. Thus it strongly stimulates mammalian cardiac muscle contraction. The polypeptide is Delta-actitoxin-Axm1d (Anthopleura xanthogrammica (Giant green sea anemone)).